Reading from the N-terminus, the 190-residue chain is Probable molybdenum cofactor guanylyltransferase (190 aa).

GTP-binding positions include leucine 9–glycine 11, lysine 21, aspartate 65, and aspartate 94. Aspartate 94 contacts Mg(2+).

The protein belongs to the MobA family. Mg(2+) is required as a cofactor.

It localises to the cytoplasm. It catalyses the reaction Mo-molybdopterin + GTP + H(+) = Mo-molybdopterin guanine dinucleotide + diphosphate. Transfers a GMP moiety from GTP to Mo-molybdopterin (Mo-MPT) cofactor (Moco or molybdenum cofactor) to form Mo-molybdopterin guanine dinucleotide (Mo-MGD) cofactor. The sequence is that of Probable molybdenum cofactor guanylyltransferase from Flavobacterium johnsoniae (strain ATCC 17061 / DSM 2064 / JCM 8514 / BCRC 14874 / CCUG 350202 / NBRC 14942 / NCIMB 11054 / UW101) (Cytophaga johnsonae).